The following is a 223-amino-acid chain: Ribosomal RNA small subunit methyltransferase G (223 aa).

Residues G90, L95, V141–E142, and R156 contribute to the S-adenosyl-L-methionine site.

It belongs to the methyltransferase superfamily. RNA methyltransferase RsmG family.

Its subcellular location is the cytoplasm. It carries out the reaction guanosine(527) in 16S rRNA + S-adenosyl-L-methionine = N(7)-methylguanosine(527) in 16S rRNA + S-adenosyl-L-homocysteine. In terms of biological role, specifically methylates the N7 position of guanine in position 527 of 16S rRNA. The chain is Ribosomal RNA small subunit methyltransferase G from Ralstonia nicotianae (strain ATCC BAA-1114 / GMI1000) (Ralstonia solanacearum).